The primary structure comprises 250 residues: Isoprenyl transferase (250 aa).

D26 is a catalytic residue. D26 provides a ligand contact to Mg(2+). Substrate contacts are provided by residues 27 to 30 (GNGR), W31, R39, H43, and 71 to 73 (STE). Residue N74 is the Proton acceptor of the active site. Substrate-binding positions include W75, R77, R198, and 204-206 (RLS). E217 lines the Mg(2+) pocket.

It belongs to the UPP synthase family. In terms of assembly, homodimer. It depends on Mg(2+) as a cofactor.

Its function is as follows. Catalyzes the condensation of isopentenyl diphosphate (IPP) with allylic pyrophosphates generating different type of terpenoids. This chain is Isoprenyl transferase, found in Streptococcus agalactiae serotype III (strain NEM316).